Here is a 163-residue protein sequence, read N- to C-terminus: MSSLTHFDAQGQAHMVDVAAKPATHRVAVATGRIEMQPATLALIESGTAKKGDVLGIARIAGIQAAKKTSDLIPLCHPLALTRVALAFALAEKGNAPQVVCTATVETVGPTGVEMEALTAVQVALLTIYDMCKAVDRGMRITDVHVLEKHGGKSGSYLADPQG.

Substrate is bound by residues 75–77 (LCH) and 115–116 (ME). The active site involves D130.

Belongs to the MoaC family. As to quaternary structure, homohexamer; trimer of dimers.

It carries out the reaction (8S)-3',8-cyclo-7,8-dihydroguanosine 5'-triphosphate = cyclic pyranopterin phosphate + diphosphate. It functions in the pathway cofactor biosynthesis; molybdopterin biosynthesis. In terms of biological role, catalyzes the conversion of (8S)-3',8-cyclo-7,8-dihydroguanosine 5'-triphosphate to cyclic pyranopterin monophosphate (cPMP). In Variovorax paradoxus (strain S110), this protein is Cyclic pyranopterin monophosphate synthase.